The following is a 308-amino-acid chain: Glutamyl-Q tRNA(Asp) synthetase (308 aa).

Residues 19 to 23 and E55 contribute to the L-glutamate site; that span reads RFAPS. A 'HIGH' region motif is present at residues 22 to 32; that stretch reads PSPSGELHFGS. Residues C111, C113, Y125, and C129 each contribute to the Zn(2+) site. L-glutamate contacts are provided by Y182 and R200. Positions 238–242 match the 'KMSKS' region motif; that stretch reads KLSKQ. Position 241 (K241) interacts with ATP.

It belongs to the class-I aminoacyl-tRNA synthetase family. GluQ subfamily. Zn(2+) is required as a cofactor.

Catalyzes the tRNA-independent activation of glutamate in presence of ATP and the subsequent transfer of glutamate onto a tRNA(Asp). Glutamate is transferred on the 2-amino-5-(4,5-dihydroxy-2-cyclopenten-1-yl) moiety of the queuosine in the wobble position of the QUC anticodon. This is Glutamyl-Q tRNA(Asp) synthetase from Escherichia coli (strain K12 / MC4100 / BW2952).